A 112-amino-acid polypeptide reads, in one-letter code: uncharacterized protein (112 aa).

N29 and N60 each carry an N-linked (GlcNAc...) asparagine; by host glycan. The chain crosses the membrane as a helical span at residues 66-86 (IFNGLGFILIVIFIYLLLITL).

It belongs to the asfivirus B117L family.

It localises to the host membrane. The protein resides in the virion. This is an uncharacterized protein from African swine fever virus (isolate Tick/South Africa/Pretoriuskop Pr4/1996) (ASFV).